We begin with the raw amino-acid sequence, 508 residues long: Phosphoenolpyruvate carboxylase (508 aa).

The protein belongs to the PEPCase type 2 family. In terms of assembly, homotetramer. It depends on Mg(2+) as a cofactor.

The enzyme catalyses oxaloacetate + phosphate = phosphoenolpyruvate + hydrogencarbonate. Functionally, catalyzes the irreversible beta-carboxylation of phosphoenolpyruvate (PEP) to form oxaloacetate (OAA), a four-carbon dicarboxylic acid source for the tricarboxylic acid cycle. This is Phosphoenolpyruvate carboxylase from Picrophilus torridus (strain ATCC 700027 / DSM 9790 / JCM 10055 / NBRC 100828 / KAW 2/3).